The chain runs to 221 residues: Extracellular superoxide dismutase [Cu-Zn] (221 aa).

The N-terminal stretch at 1–19 (MKTRVVLILALSVCIEAAS) is a signal peptide. Asn56 carries N-linked (GlcNAc...) asparagine glycosylation. 3 residues coordinate Cu cation: His70, His72, and His87. Cys81 and Cys170 are joined by a disulfide. Zn(2+) is bound by residues His87, His95, His104, and Asp107. His144 contributes to the Cu cation binding site.

It belongs to the Cu-Zn superoxide dismutase family. It depends on Cu cation as a cofactor. Requires Zn(2+) as cofactor. As to expression, isoform 2 is preferentially expressed in eggs.

The protein localises to the secreted. Its subcellular location is the extracellular space. It localises to the membrane. It carries out the reaction 2 superoxide + 2 H(+) = H2O2 + O2. Its function is as follows. Protects cells against oxidative stress by converting superoxide radicals to hydrogen peroxide. Oxidative stress is involved in various biological dysfunctions and senescence. The sequence is that of Extracellular superoxide dismutase [Cu-Zn] (sod-4) from Caenorhabditis elegans.